Reading from the N-terminus, the 2094-residue chain is Non-reducing polyketide synthase ustP (2094 aa).

An N-terminal acylcarrier protein transacylase (SAT) domain region spans residues 9–243 (VFGDLSVPYH…GKIQVGGLFH (235 aa)). The interval 357 to 377 (NTAGVDSSSRGSGHADAEKQP) is disordered. The Ketosynthase family 3 (KS3) domain maps to 379–813 (RSKIAIIGFS…GGNSSVLVED (435 aa)). Catalysis depends on for beta-ketoacyl synthase activity residues Cys-551, His-686, and His-727. Residues 914 to 1227 (FSFTGQGSQY…EDDCKIFTPA (314 aa)) form a malonyl-CoA:ACP transacylase (MAT) domain region. Ser-1004 functions as the For acyl/malonyl transferase activity in the catalytic mechanism. Residues 1305-1629 (TTSVQYITAE…QRKVLDLVLP (325 aa)) form a product template (PT) domain region. The segment at 1308–1445 (VQYITAESYG…CSGFFTDKSR (138 aa)) is N-terminal hotdog fold. Positions 1308–1625 (VQYITAESYG…FAAVQRKVLD (318 aa)) constitute a PKS/mFAS DH domain. His-1341 serves as the catalytic Proton acceptor; for dehydratase activity. Residues 1473 to 1625 (GSVHMIKTGM…FAAVQRKVLD (153 aa)) form a C-terminal hotdog fold region. Asp-1536 functions as the Proton donor; for dehydratase activity in the catalytic mechanism. Over residues 1644 to 1671 (AAAAPSQRQQQQQQQQQQQPAQPVAASQ) the composition is skewed to low complexity. The interval 1644–1689 (AAAAPSQRQQQQQQQQQQQPAQPVAASQESGMDDMPPTLVPSEKKD) is disordered. A Carrier domain is found at 1689-1763 (DVPSEKLKVI…ELVRHILGSS (75 aa)). Ser-1723 carries the post-translational modification O-(pantetheine 4'-phosphoryl)serine. Polar residues predominate over residues 1762–1778 (SSTPSSDSGPATPSITP). Residues 1762–1782 (SSTPSSDSGPATPSITPLQEP) are disordered. The tract at residues 1844–2069 (KVWLFPDGSG…GVVEGAHHFS (226 aa)) is claisen cyclase domain. Residue Ser-1916 is the For Claisen cyclase activity of the active site.

It catalyses the reaction 6 malonyl-CoA + acetyl-CoA + 6 H(+) = naphtopyrone YWA1 + 6 CO2 + 7 CoA + H2O. The protein operates within secondary metabolite biosynthesis. Functionally, non-reducing polyketide synthase; part of the gene cluster that mediates the biosynthesis of ustilaginoidins, dimeric gamma-naphthopyrones isolated from different fungal species. The first step in the biosynthesis of ustilaginoidins is the production of gamma-naphthopyrone precursor YWA1 by the non-reducing polyketide synthase ustP, via condensation of one acetyl-CoA starter unit with 6 malonyl-CoA units. YWA1 is then probably substrate of the ustZ to yield norrubrofusarin via a dehydration reaction. A key enzyme in the biosynthetic pathway is the laccase ustL, which catalyzes the oxidative dimerization of norrubrofusarin to ustilaginoidin A. It can produce the M- and P-atropisomers in varying amounts, depending on the reaction conditions. For the biosynthesis of 3-methylustilaginoid in derivatives such as chaetochromin A, a methylated derivative of YWA1 is required. The C-methylation is considered to be catalyzed by ustM, the phosphopantetheine attachment site of which indicates that it acts on the growing polyketide chain before release of the product. For the biosynthesis of chaetochromin A, it is assumed that saturation of the D2 double bond takes place before dimerization, and is probably catalyzed by an external reductase because no candidate gene was identified within the cluster. The polypeptide is Non-reducing polyketide synthase ustP (Ustilaginoidea virens (Rice false smut fungus)).